Here is a 380-residue protein sequence, read N- to C-terminus: Crotonobetainyl-CoA reductase (380 aa).

This sequence belongs to the acyl-CoA dehydrogenase family. In terms of assembly, homotetramer. FAD serves as cofactor.

The protein localises to the cytoplasm. The enzyme catalyses 4-(trimethylamino)butanoyl-CoA + oxidized [electron-transfer flavoprotein] + H(+) = crotonobetainyl-CoA + reduced [electron-transfer flavoprotein]. It participates in amine and polyamine metabolism; carnitine metabolism. Functionally, catalyzes the reduction of crotonobetainyl-CoA to gamma-butyrobetainyl-CoA. This Salmonella arizonae (strain ATCC BAA-731 / CDC346-86 / RSK2980) protein is Crotonobetainyl-CoA reductase.